Reading from the N-terminus, the 365-residue chain is Galactoside alpha-(1,2)-fucosyltransferase 1 (365 aa).

The Cytoplasmic segment spans residues 1–8 (MWPLSHRH). The helical; Signal-anchor for type II membrane protein transmembrane segment at 9–25 (LCLAFLLVCVLSAISFF) threads the bilayer. At 26-365 (LHIYQDSIRH…LSSLWTLAEP (340 aa)) the chain is on the lumenal side. Asn-65, Asn-301, and Asn-327 each carry an N-linked (GlcNAc...) asparagine glycan.

It belongs to the glycosyltransferase 11 family.

The protein localises to the golgi apparatus. Its subcellular location is the golgi stack membrane. It catalyses the reaction a beta-D-galactosyl-(1-&gt;4)-N-acetyl-beta-D-glucosaminyl derivative + GDP-beta-L-fucose = an alpha-L-Fuc-(1-&gt;2)-beta-D-Gal-(1-&gt;4)-beta-D-GlcNAc derivative + GDP + H(+). It carries out the reaction a ganglioside GA1 + GDP-beta-L-fucose = a ganglioside Fuc-GA1 + GDP + H(+). The enzyme catalyses a beta-D-Gal-(1-&gt;3)-beta-D-GlcNAc-(1-&gt;3)-beta-D-Gal-(1-&gt;4)-beta-D-Glc-(1&lt;-&gt;1')-Cer(d18:1(4E)) + GDP-beta-L-fucose = alpha-L-fucosyl-(1-&gt;2)- beta-D-galactosyl-(1-&gt;3)-N-acetyl-beta-D-glucosaminyl-(1-&gt;3)-beta-D-galactosyl-(1-&gt;4)-beta-D-glucosyl-(1&lt;-&gt;1')-N-acylsphing-4-enine + GDP + H(+). The catalysed reaction is a neolactoside nLc4Cer(d18:1(4E)) + GDP-beta-L-fucose = a neolactoside IV(2)-alpha-Fuc-nLc4Cer(d18:1(4E)) + GDP + H(+). It catalyses the reaction a ganglioside GM1 + GDP-beta-L-fucose = a ganglioside Fuc-GM1 + GDP + H(+). It carries out the reaction beta-D-galactosyl-(1-&gt;3)-N-acetyl-D-galactosamine + GDP-beta-L-fucose = alpha-L-fucosyl-(1-&gt;2)-beta-D-galactosyl-(1-&gt;3)-N-acetyl-D-galactosamine + GDP + H(+). It participates in protein modification; protein glycosylation. In terms of biological role, catalyzes the transfer of L-fucose, from a guanosine diphosphate-beta-L-fucose, to the terminal galactose residue of glycoconjugates through an alpha(1,2) linkage leading to H antigen synthesis that is an intermediate substrate in the synthesis of ABO blood group antigens. H antigen is essential for maturation of the glomerular layer of the main olfactory bulb, in cell migration and early cell-cell contacts during tumor associated angiogenesis. Preferentially fucosylates soluble lactose and to a lesser extent fucosylates glycolipids gangliosides GA1 and GM1a. The chain is Galactoside alpha-(1,2)-fucosyltransferase 1 from Leontocebus fuscicollis (Brown-mantled tamarin).